A 426-amino-acid polypeptide reads, in one-letter code: MLDPTLLRQQLAKLAECLSTVRGFTLDVAALEALESERKRIQVHTQELQSLRNSKSKAIGQARSKGEDVSSLMAEVAAFSDDLKASEIALEEIRTELEKVALGIPNLPQQDVPLGADERDNVEQARWGVPRTFDFSIKDHVELGACHGWLDAESAAKLSGARFTVLRGPIARLHRALAQCMLDLHVRQHGYEEVNVPIIVNADSLYGTGQLPKFEEDMFSTQLGEHRRYLISTSEISLTNLVRNEIIEADRLPLRMAAHSLCFRSEAGSGGRDTRGMIRQHQFEKVELVSVCKPQESEGEHQRMTRCAETVLEMLGLPYRKILLCTGDMGFAATKTYDLEVWLPSQGMYREISSCSNCGDFQARRMQARWRNSVTGKPELVHTLNGSGVAVGRAMIAVMENYQNADGSITVPEVLRPYMDGLSRIG.

Position 233–235 (Thr233–Glu235) interacts with L-serine. Position 264 to 266 (Arg264 to Glu266) interacts with ATP. Glu287 provides a ligand contact to L-serine. Residue Glu351 to Ser354 coordinates ATP. Ser387 provides a ligand contact to L-serine.

The protein belongs to the class-II aminoacyl-tRNA synthetase family. Type-1 seryl-tRNA synthetase subfamily. In terms of assembly, homodimer. The tRNA molecule binds across the dimer.

The protein localises to the cytoplasm. The enzyme catalyses tRNA(Ser) + L-serine + ATP = L-seryl-tRNA(Ser) + AMP + diphosphate + H(+). The catalysed reaction is tRNA(Sec) + L-serine + ATP = L-seryl-tRNA(Sec) + AMP + diphosphate + H(+). Its pathway is aminoacyl-tRNA biosynthesis; selenocysteinyl-tRNA(Sec) biosynthesis; L-seryl-tRNA(Sec) from L-serine and tRNA(Sec): step 1/1. Its function is as follows. Catalyzes the attachment of serine to tRNA(Ser). Is also able to aminoacylate tRNA(Sec) with serine, to form the misacylated tRNA L-seryl-tRNA(Sec), which will be further converted into selenocysteinyl-tRNA(Sec). This chain is Serine--tRNA ligase, found in Xylella fastidiosa (strain 9a5c).